Here is a 332-residue protein sequence, read N- to C-terminus: Homeobox protein SIX3 (332 aa).

Residues 72 to 119 are interaction with TLE5; it reads APPEELSMFQLPTLNFSPEQVASVCETLEETGDIERLGRFLWSLPVAP. The segment at residues 206 to 265 is a DNA-binding region (homeobox); the sequence is GEQKTHCFKERTRSLLREWYLQDPYPNPSKKRELAQATGLTPTQVGNWFKNRRQRDRAAA. Positions 232–234 are bind to RHO promoter; the sequence is NPS. Disordered regions lie at residues 232-251 and 258-332; these read NPSK…TQVG and RQRD…ECDV. Residues 293-309 are compositionally biased toward low complexity; it reads SAESPSTAASPTTSVSS. The segment covering 316–332 has biased composition (polar residues); it reads TGTSILSVTSSDSECDV.

This sequence belongs to the SIX/Sine oculis homeobox family. As to quaternary structure, interacts with EYA4; translocates EYA4 from the cytoplasm to the nucleus and promotes activation of their target genes. Interacts with MTA1 and HDAC2; represses its own transcription. Interacts with MTA1; facilitates the binding of SIX3 to the core DNA motif of SIX3 promoter. Interacts with EYA1; promotes EYA1 translocation to the nucleus. Interacts with TLE1 and TLE5 (via Q domain); can act in combination with either TLE1 and/or TLE5 leading to transcriptional repression or activation, respectively. Interacts (via homeobox) with NR4A3; differentially regulates the transcriptional activities NR4A3. Interacts with GMNN. Interacts with TLE4.

The protein resides in the nucleus. In terms of biological role, transcriptional regulator which can act as both a transcriptional repressor and activator by binding a ATTA homeodomain core recognition sequence on these target genes. During forebrain development represses WNT1 expression allowing zona limitans intrathalamica formation and thereby ensuring proper anterio-posterior patterning of the diencephalon and formation of the rostral diencephalon. Acts as a direct upstream activator of SHH expression in the rostral diencephalon ventral midline and that in turn SHH maintains its expression. In addition, Six3 activity is required for the formation of the telencephalon. During postnatal stages of brain development is necessary for ependymal cell maturation by promoting the maturation of radial glia into ependymal cells through regulation of neuroblast proliferation and migration. Acts on the proliferation and differentiation of neural progenitor cells through activating transcription of CCND1 and CCND2. During early lens formation plays a role in lens induction and specification by activating directly PAX6 in the presumptive lens ectoderm. In turn PAX6 activates SIX3 resulting in activation of PDGFRA and CCND1 promoting cell proliferation. Also is required for the neuroretina development by directly suppressing WNT8B expression in the anterior neural plate territory. Its action during retina development and lens morphogenesis is TLE5 and TLE4-dependent manner. Furthermore, during eye development regulates several genes expression. Before and during early lens development represses the CRYGF promoter by binding a SIX repressor element. Directly activates RHO transcription, or cooperates with CRX or NRL. Six3 also functions in the formation of the proximodistal axis of the optic cup, and promotes the formation of optic vesicles-like structures. During pituitary development, acts in parallel or alternatively with HESX1 to control cell proliferation through Wnt/beta-catenin pathway. Plays a role in eye development by suppressing WNT1 expression and in dorsal-ventral patterning by repressing BMP signaling pathway. This Homo sapiens (Human) protein is Homeobox protein SIX3 (SIX3).